The chain runs to 273 residues: Peptidyl-prolyl cis-trans isomerase E (273 aa).

The RRM domain occupies 1–48 (MPMDYQTEKHRGFAFVEFEEVEDAMSAIDNMNESEIFGRTIRVNVARP). The disordered stretch occupies residues 77 to 103 (RKLDEPDIVNPSDTSENVEDLSDEEMR). One can recognise a PPIase cyclophilin-type domain in the interval 115–271 (FFDIRIGNGD…EPVIISRCGE (157 aa)).

The protein belongs to the cyclophilin-type PPIase family. PPIase E subfamily.

The protein resides in the cytoplasm. The enzyme catalyses [protein]-peptidylproline (omega=180) = [protein]-peptidylproline (omega=0). Binds cyclosporin A (CsA). CsA mediates some of its effects via an inhibitory action on PPIase. Its function is as follows. PPIases accelerate the folding of proteins. It catalyzes the cis-trans isomerization of proline imidic peptide bonds in oligopeptides. The protein is Peptidyl-prolyl cis-trans isomerase E of Schistosoma mansoni (Blood fluke).